A 110-amino-acid chain; its full sequence is Nucleoid-associated protein NFA_2940 (110 aa).

Belongs to the YbaB/EbfC family. As to quaternary structure, homodimer.

It localises to the cytoplasm. It is found in the nucleoid. In terms of biological role, binds to DNA and alters its conformation. May be involved in regulation of gene expression, nucleoid organization and DNA protection. The sequence is that of Nucleoid-associated protein NFA_2940 from Nocardia farcinica (strain IFM 10152).